The chain runs to 70 residues: Squirrel monkey agnoprotein (70 aa).

As to quaternary structure, interacts with VP1. Interacts with Large T antigen. Interacts with small t antigen. Post-translationally, phosphorylated by host PKC. Phosphorylation alters the stability and may also have an impact on the subcellular location.

Its subcellular location is the host cytoplasm. It localises to the host nucleus. Its function is as follows. Alters the structure of the nuclear envelope. Involved in the perinuclear-nuclear localization of the capsid protein VP1 during virion assembly and maturation. May contribute to viral genome transcription and translation of viral late proteins. Plays an important role in the release of progeny virions from infected cells and in viral propagation. The polypeptide is Squirrel monkey agnoprotein (agnogene) (Saimiri boliviensis boliviensis (Bolivian squirrel monkey)).